Here is a 504-residue protein sequence, read N- to C-terminus: L-carnitine/gamma-butyrobetaine antiporter (504 aa).

12 helical membrane-spanning segments follow: residues 8 to 28 (AGIEPKVFFPPLIIVGILCWL), 51 to 71 (WGWAFEWYMVIMFGGWFWLVF), 92 to 112 (IFMMFASCTSAAVLFWGSIEI), 143 to 163 (GPLPWATYSFLSVAFAYFFFV), 195 to 215 (FYLVALILAMGTSLGLATPLV), 231 to 251 (LDAIIISCWILLNAICVAFGL), 263 to 283 (TYLSFLMLGWVFIVGGASFIV), 315 to 335 (AWTVFYWAWWVIYAIQMSIFL), 347 to 367 (LCLGMVSGLTAGTWLIWTYSG), 403 to 423 (LSTATMWGFFILCFIATVTLI), 446 to 466 (LLVRIGWSVLVGIIGIILLAL), and 475 to 495 (AIIAGGCPLFFVNIMVTLSFI).

The protein belongs to the BCCT transporter (TC 2.A.15) family. CaiT subfamily. As to quaternary structure, homotrimer.

It is found in the cell inner membrane. It catalyses the reaction 4-(trimethylamino)butanoate(in) + (R)-carnitine(out) = 4-(trimethylamino)butanoate(out) + (R)-carnitine(in). It functions in the pathway amine and polyamine metabolism; carnitine metabolism. Its function is as follows. Catalyzes the exchange of L-carnitine for gamma-butyrobetaine. The chain is L-carnitine/gamma-butyrobetaine antiporter from Proteus sp. (strain LE138).